A 396-amino-acid chain; its full sequence is Endo-1,4-beta-xylanase A (396 aa).

A signal peptide spans 1-28 (MITLFRKPFVAGLAISLLVGGGIGNVAA). The 346-residue stretch at 51 to 396 (AWQVASLSER…VKPAYWRIID (346 aa)) folds into the GH10 domain. Glu195 serves as the catalytic Proton donor. Glu301 acts as the Nucleophile in catalysis.

The protein belongs to the glycosyl hydrolase 10 (cellulase F) family.

Its subcellular location is the secreted. It catalyses the reaction Endohydrolysis of (1-&gt;4)-beta-D-xylosidic linkages in xylans.. The protein operates within glycan degradation; xylan degradation. The protein is Endo-1,4-beta-xylanase A (xynA) of Halalkalibacterium halodurans (strain ATCC BAA-125 / DSM 18197 / FERM 7344 / JCM 9153 / C-125) (Bacillus halodurans).